A 379-amino-acid polypeptide reads, in one-letter code: Homoserine O-succinyltransferase (379 aa).

Residues 48-357 enclose the AB hydrolase-1 domain; that stretch reads NAVLICHALS…SAHGHDAFLM (310 aa). The active-site Nucleophile is the S154. R224 contacts substrate. Active-site residues include D319 and H352. A substrate-binding site is contributed by D353.

Belongs to the AB hydrolase superfamily. MetX family. In terms of assembly, homodimer.

The protein resides in the cytoplasm. It catalyses the reaction L-homoserine + succinyl-CoA = O-succinyl-L-homoserine + CoA. It functions in the pathway amino-acid biosynthesis; L-methionine biosynthesis via de novo pathway; O-succinyl-L-homoserine from L-homoserine: step 1/1. With respect to regulation, activity increases in the presence of MetW. In terms of biological role, transfers a succinyl group from succinyl-CoA to L-homoserine, forming succinyl-L-homoserine. This chain is Homoserine O-succinyltransferase, found in Neisseria gonorrhoeae.